Reading from the N-terminus, the 101-residue chain is Transcription and mRNA export factor SUS1 (101 aa).

It belongs to the ENY2 family. In terms of assembly, component of the nuclear pore complex (NPC)-associated TREX-2 complex (transcription and export complex 2), composed of at least SUS1, SAC3, THP1, SEM1, and CDC31. TREX-2 contains 2 SUS1 chains. The TREX-2 complex interacts with the nucleoporin NUP1. Component of the 1.8 MDa SAGA transcription coactivator-HAT complex. SAGA is built of 5 distinct domains with specialized functions. Within the SAGA complex, SUS1, SGF11, SGF73 and UBP8 form an additional subcomplex of SAGA called the DUB module (deubiquitination module). Interacts directly with THP1, SAC3, SGF11, and with the RNA polymerase II.

It localises to the nucleus. The protein localises to the nucleoplasm. Its subcellular location is the cytoplasm. The protein resides in the P-body. Its function is as follows. Involved in mRNA export coupled transcription activation by association with both the TREX-2 and the SAGA complexes. At the promoters, SAGA is required for recruitment of the basal transcription machinery. It influences RNA polymerase II transcriptional activity through different activities such as TBP interaction and promoter selectivity, interaction with transcription activators, and chromatin modification through histone acetylation and deubiquitination. Within the SAGA complex, participates in a subcomplex required for deubiquitination of H2B and for the maintenance of steady-state H3 methylation levels. The TREX-2 complex functions in docking export-competent ribonucleoprotein particles (mRNPs) to the nuclear entrance of the nuclear pore complex (nuclear basket). TREX-2 participates in mRNA export and accurate chromatin positioning in the nucleus by tethering genes to the nuclear periphery. May also be involved in cytoplasmic mRNA decay by interaction with components of P-bodies. The sequence is that of Transcription and mRNA export factor SUS1 from Debaryomyces hansenii (strain ATCC 36239 / CBS 767 / BCRC 21394 / JCM 1990 / NBRC 0083 / IGC 2968) (Yeast).